The chain runs to 122 residues: Small ribosomal subunit protein uS13 (122 aa).

Positions 95–122 (GLPVHGQRTKTNARTRKGPARTVAGKKK) are disordered.

Belongs to the universal ribosomal protein uS13 family. Part of the 30S ribosomal subunit. Forms a loose heterodimer with protein S19. Forms two bridges to the 50S subunit in the 70S ribosome.

Functionally, located at the top of the head of the 30S subunit, it contacts several helices of the 16S rRNA. In the 70S ribosome it contacts the 23S rRNA (bridge B1a) and protein L5 of the 50S subunit (bridge B1b), connecting the 2 subunits; these bridges are implicated in subunit movement. Contacts the tRNAs in the A and P-sites. The sequence is that of Small ribosomal subunit protein uS13 from Geotalea uraniireducens (strain Rf4) (Geobacter uraniireducens).